The primary structure comprises 217 residues: 3,4-dihydroxy-2-butanone 4-phosphate synthase (217 aa).

Residues arginine 37–glutamate 38, aspartate 42, arginine 150–threonine 154, and glutamate 174 each bind D-ribulose 5-phosphate. Glutamate 38 is a binding site for Mg(2+). Residue histidine 153 coordinates Mg(2+).

This sequence belongs to the DHBP synthase family. Homodimer. Requires Mg(2+) as cofactor. It depends on Mn(2+) as a cofactor.

It catalyses the reaction D-ribulose 5-phosphate = (2S)-2-hydroxy-3-oxobutyl phosphate + formate + H(+). Its pathway is cofactor biosynthesis; riboflavin biosynthesis; 2-hydroxy-3-oxobutyl phosphate from D-ribulose 5-phosphate: step 1/1. Its function is as follows. Catalyzes the conversion of D-ribulose 5-phosphate to formate and 3,4-dihydroxy-2-butanone 4-phosphate. The protein is 3,4-dihydroxy-2-butanone 4-phosphate synthase of Tolumonas auensis (strain DSM 9187 / NBRC 110442 / TA 4).